A 411-amino-acid chain; its full sequence is Lissencephaly-1 homolog (411 aa).

A LisH domain is found at 9–41; the sequence is QREELNQAIADYLGSNGYADSLETFRKEADLST. Residues 56–83 are a coiled coil; the sequence is TSVIRLQKKVMELEAKLTEAEKEVIEGA. WD repeat units lie at residues 106 to 147, 148 to 187, 191 to 230, 233 to 272, 275 to 334, 337 to 376, and 379 to 411; these read GHRA…RSLK, GHTD…ECIK, GHDH…CVKT, GHRE…CKVE, DHEH…CLLT, GHDN…CMKT, and AHQH…WECR.

The protein belongs to the WD repeat LIS1/nudF family.

Its subcellular location is the cytoplasm. It localises to the cytoskeleton. The protein localises to the microtubule organizing center. The protein resides in the centrosome. Its function is as follows. Positively regulates the activity of the minus-end directed microtubule motor protein dynein. May enhance dynein-mediated microtubule sliding by targeting dynein to the microtubule plus end. Required for several dynein- and microtubule-dependent processes. This chain is Lissencephaly-1 homolog, found in Drosophila sechellia (Fruit fly).